The sequence spans 845 residues: Envelope glycoprotein B (845 aa).

Residues Met1 to Ser26 form the signal peptide. At Arg27 to Pro732 the chain is on the virion surface side. The disordered stretch occupies residues Asp29–Pro57. The segment covering Thr33 to Lys49 has biased composition (low complexity). 5 disulfide bridges follow: Cys68/Cys528, Cys85/Cys484, Cys157/Cys222, Cys315/Cys362, and Cys550/Cys587. An involved in fusion and/or binding to host membrane region spans residues Val124–Glu130. Asn179 is a glycosylation site (N-linked (GlcNAc...) asparagine; by host). The segment at Gly208–Val216 is involved in fusion and/or binding to host membrane. N-linked (GlcNAc...) asparagine; by host glycans are attached at residues Asn254, Asn275, Asn355, Asn368, Asn372, Asn385, and Asn408. Residues His411–Gly451 are disordered. 5 N-linked (GlcNAc...) asparagine; by host glycosylation sites follow: Asn455, Asn562, Asn599, Asn614, and Asn628. The hydrophobic membrane proximal region stretch occupies residues Leu678–Lys730. Residues Leu733–Ser753 traverse the membrane as a helical segment. Residues Arg754–Glu845 are Intravirion-facing. Residues Arg802–Glu845 are disordered. Residues Ser811–Gly822 are compositionally biased toward polar residues. The Internalization motif motif lies at Tyr830–Leu833.

It belongs to the herpesviridae glycoprotein B family. In terms of assembly, homotrimer; disulfide-linked. Binds to heparan sulfate proteoglycans. Interacts with gH/gL heterodimer. Interacts with host ITGAV-ITGB3; this interaction mediates viral entry. Post-translationally, a proteolytic cleavage by host furin generates two subunits that remain linked by disulfide bonds.

It localises to the virion membrane. Its subcellular location is the host cell membrane. It is found in the host endosome membrane. The protein localises to the host Golgi apparatus membrane. In terms of biological role, envelope glycoprotein that forms spikes at the surface of the virion envelope. Participates in viral entry through an RGD motif that binds ITGAV-ITGB3. Membrane fusion is mediated by the fusion machinery composed at least of gB and the heterodimer gH/gL. May be involved in the fusion between the virion envelope and the outer nuclear membrane during virion egress. This Homo sapiens (Human) protein is Envelope glycoprotein B.